The chain runs to 124 residues: Putative melanoma-associated antigen 5P (124 aa).

Over residues 1–14 (MSLEQKSQHCKPEE) the composition is skewed to basic and acidic residues. Disordered regions lie at residues 1–69 (MSLE…QGAS) and 82–103 (QSIK…DPES). The MAGE domain occupies 3 to 124 (LEQKSQHCKP…DLIHFLLLKY (122 aa)). 2 stretches are compositionally biased toward polar residues: residues 30-44 (AATT…SSSP) and 82-100 (QSIK…TSPD).

Expressed in many tumors of several types, such as melanoma, head and neck squamous cell carcinoma, lung carcinoma and breast carcinoma, but not in normal tissues except for testes.

May negatively regulates apoptosis. This is Putative melanoma-associated antigen 5P from Homo sapiens (Human).